Reading from the N-terminus, the 156-residue chain is Small ribosomal subunit protein uS7 (156 aa).

This sequence belongs to the universal ribosomal protein uS7 family. In terms of assembly, part of the 30S ribosomal subunit. Contacts proteins S9 and S11.

In terms of biological role, one of the primary rRNA binding proteins, it binds directly to 16S rRNA where it nucleates assembly of the head domain of the 30S subunit. Is located at the subunit interface close to the decoding center, probably blocks exit of the E-site tRNA. The chain is Small ribosomal subunit protein uS7 from Deinococcus radiodurans (strain ATCC 13939 / DSM 20539 / JCM 16871 / CCUG 27074 / LMG 4051 / NBRC 15346 / NCIMB 9279 / VKM B-1422 / R1).